Here is a 188-residue protein sequence, read N- to C-terminus: NADH-quinone oxidoreductase subunit I 2 (188 aa).

4Fe-4S ferredoxin-type domains are found at residues 56 to 88 (HFLKRDEEGEIKCVACELCARICPCDCIEVVPY) and 98 to 127 (AKFEIDTARCLFCGLCEDACPADAIALGQQ). Residues C68, C71, C74, C78, C107, C110, C113, and C117 each coordinate [4Fe-4S] cluster.

The protein belongs to the complex I 23 kDa subunit family. As to quaternary structure, NDH-1 is composed of 14 different subunits. Subunits NuoA, H, J, K, L, M, N constitute the membrane sector of the complex. Requires [4Fe-4S] cluster as cofactor.

The protein resides in the cell inner membrane. It carries out the reaction a quinone + NADH + 5 H(+)(in) = a quinol + NAD(+) + 4 H(+)(out). Functionally, NDH-1 shuttles electrons from NADH, via FMN and iron-sulfur (Fe-S) centers, to quinones in the respiratory chain. The immediate electron acceptor for the enzyme in this species is believed to be ubiquinone. Couples the redox reaction to proton translocation (for every two electrons transferred, four hydrogen ions are translocated across the cytoplasmic membrane), and thus conserves the redox energy in a proton gradient. This Rhizobium etli (strain ATCC 51251 / DSM 11541 / JCM 21823 / NBRC 15573 / CFN 42) protein is NADH-quinone oxidoreductase subunit I 2.